Reading from the N-terminus, the 835-residue chain is Lon protease (835 aa).

One can recognise a Lon N-terminal domain in the interval 4 to 224; sequence LPYIAIRNQL…LAINMLINAI (221 aa). Residue 412 to 419 coordinates ATP; the sequence is GPPGTGKT. The Lon proteolytic domain occupies 649–832; sequence QPKAGVVNAL…DEIFKYIFEA (184 aa). Residues Ser738 and Lys781 contribute to the active site.

Belongs to the peptidase S16 family. Homohexamer. Organized in a ring with a central cavity.

It localises to the cytoplasm. It carries out the reaction Hydrolysis of proteins in presence of ATP.. ATP-dependent serine protease that mediates the selective degradation of mutant and abnormal proteins as well as certain short-lived regulatory proteins. Required for cellular homeostasis and for survival from DNA damage and developmental changes induced by stress. Degrades polypeptides processively to yield small peptide fragments that are 5 to 10 amino acids long. Binds to DNA in a double-stranded, site-specific manner. The chain is Lon protease from Metamycoplasma arthritidis (strain 158L3-1) (Mycoplasma arthritidis).